Here is a 365-residue protein sequence, read N- to C-terminus: uncharacterized protein (365 aa).

29 to 36 is an ATP binding site; the sequence is GPLNSGKS.

Belongs to the archaeal ATPase family.

This is an uncharacterized protein from Methanocaldococcus jannaschii (strain ATCC 43067 / DSM 2661 / JAL-1 / JCM 10045 / NBRC 100440) (Methanococcus jannaschii).